The sequence spans 252 residues: Imidazole glycerol phosphate synthase subunit HisF (252 aa).

Residues Asp11 and Asp130 contribute to the active site.

Belongs to the HisA/HisF family. Heterodimer of HisH and HisF.

The protein localises to the cytoplasm. It catalyses the reaction 5-[(5-phospho-1-deoxy-D-ribulos-1-ylimino)methylamino]-1-(5-phospho-beta-D-ribosyl)imidazole-4-carboxamide + L-glutamine = D-erythro-1-(imidazol-4-yl)glycerol 3-phosphate + 5-amino-1-(5-phospho-beta-D-ribosyl)imidazole-4-carboxamide + L-glutamate + H(+). Its pathway is amino-acid biosynthesis; L-histidine biosynthesis; L-histidine from 5-phospho-alpha-D-ribose 1-diphosphate: step 5/9. In terms of biological role, IGPS catalyzes the conversion of PRFAR and glutamine to IGP, AICAR and glutamate. The HisF subunit catalyzes the cyclization activity that produces IGP and AICAR from PRFAR using the ammonia provided by the HisH subunit. In Thermococcus kodakarensis (strain ATCC BAA-918 / JCM 12380 / KOD1) (Pyrococcus kodakaraensis (strain KOD1)), this protein is Imidazole glycerol phosphate synthase subunit HisF.